A 322-amino-acid polypeptide reads, in one-letter code: Cysteine protease YopT (322 aa).

Active-site residues include C139, H258, and D274.

It belongs to the peptidase C58 family. As to quaternary structure, interacts with human ARHA.

It is found in the secreted. Its function is as follows. Cysteine protease, which is translocated into infected cells and plays a central role in pathogenesis by cleaving the C-terminus end of the human small GTPase RhoA/ARHA, a regulator of cytoskeleton. Once cleaved, ARHA loses its lipid modification, and is released from the cell membrane, leading to the subsequent disruption of actin cytoskeleton of the host cell. The polypeptide is Cysteine protease YopT (yopT) (Yersinia pestis).